A 286-amino-acid chain; its full sequence is MYLQDVIMKLNDFWASKGCLLEQPYDMEVGAGTFHPATFFGSLRKGPWKVAYVQPSRRPTDGRYGENPNRLQRYFQYQVIIKPSPENSQELYLESLEYLGINLKEHDIRFVEDNWESPTLGAWGVGWEVWLDGMEITQFTYFQQIGGISLKDIPLEITYGLERIAMYLQGVDNVYEVQWNENVKYGDVFLENEREFSVFNFEEANVGLLFRHFDEYEKEFYRLVEKNLYLPAYDYILKCSHTFNLLDARGAISVSQRQTYVKRIQAMARKAARVFLEVQANENSPA.

The protein belongs to the class-II aminoacyl-tRNA synthetase family. As to quaternary structure, tetramer of two alpha and two beta subunits.

It localises to the cytoplasm. It catalyses the reaction tRNA(Gly) + glycine + ATP = glycyl-tRNA(Gly) + AMP + diphosphate. This is Glycine--tRNA ligase alpha subunit (glyQ) from Thermotoga maritima (strain ATCC 43589 / DSM 3109 / JCM 10099 / NBRC 100826 / MSB8).